Here is a 974-residue protein sequence, read N- to C-terminus: RING finger protein nhl-1 (974 aa).

The segment at 1-29 (MSSSPQNEAEAREKMRELMSRPPSSRPAD) is disordered. The span at 9-19 (AEAREKMRELM) shows a compositional bias: basic and acidic residues. Residues 43–84 (CPICLDRYKQPKLLPCQHTFCYPCLESCADTLHRNLKCPECR) form an RING-type zinc finger. Disordered regions lie at residues 360–395 (VKSD…IRYR) and 416–548 (SLLT…DFPV). Polar residues predominate over residues 416 to 431 (SLLTTSVTADSSSRTS). The segment covering 437–446 (RVTRSVEPTK) has biased composition (basic and acidic residues). A compositionally biased stretch (polar residues) spans 447–465 (SRPTSLIVPNTETPRTVSP). The segment covering 488–501 (APLPQLPIRKPPLP) has biased composition (pro residues). The span at 511–528 (LNEKVETIRRAHQQRQDA) shows a compositional bias: basic and acidic residues. Positions 529-538 (SRAASRAVSS) are enriched in low complexity. NHL repeat units lie at residues 699 to 742 (RAVF…FDKD), 746 to 788 (VRQF…FGLE), 792 to 835 (LFSF…FDKN), 839 to 883 (IAKF…FDPH), 887 to 930 (LFSF…FDAQ), and 934 to 974 (VSSF…IQIF).

As to quaternary structure, interacts with ubc-13.

This chain is RING finger protein nhl-1, found in Caenorhabditis elegans.